The chain runs to 396 residues: Tryptophan synthase beta chain (396 aa).

An N6-(pyridoxal phosphate)lysine modification is found at K88.

It belongs to the TrpB family. Tetramer of two alpha and two beta chains. The cofactor is pyridoxal 5'-phosphate.

It carries out the reaction (1S,2R)-1-C-(indol-3-yl)glycerol 3-phosphate + L-serine = D-glyceraldehyde 3-phosphate + L-tryptophan + H2O. It participates in amino-acid biosynthesis; L-tryptophan biosynthesis; L-tryptophan from chorismate: step 5/5. The beta subunit is responsible for the synthesis of L-tryptophan from indole and L-serine. The polypeptide is Tryptophan synthase beta chain (Shewanella baltica (strain OS195)).